Here is an 85-residue protein sequence, read N- to C-terminus: Translation initiation factor IF-1 2 (85 aa).

The S1-like domain occupies 1–72 (MAKEELIEMH…SKGRITFRHI (72 aa)).

Belongs to the IF-1 family. Component of the 30S ribosomal translation pre-initiation complex which assembles on the 30S ribosome in the order IF-2 and IF-3, IF-1 and N-formylmethionyl-tRNA(fMet); mRNA recruitment can occur at any time during PIC assembly.

The protein resides in the cytoplasm. Its function is as follows. One of the essential components for the initiation of protein synthesis. Stabilizes the binding of IF-2 and IF-3 on the 30S subunit to which N-formylmethionyl-tRNA(fMet) subsequently binds. Helps modulate mRNA selection, yielding the 30S pre-initiation complex (PIC). Upon addition of the 50S ribosomal subunit IF-1, IF-2 and IF-3 are released leaving the mature 70S translation initiation complex. This is Translation initiation factor IF-1 2 from Polaromonas sp. (strain JS666 / ATCC BAA-500).